A 1615-amino-acid chain; its full sequence is Ferredoxin-dependent glutamate synthase, chloroplastic (1615 aa).

Residues 1–52 constitute a chloroplast transit peptide; it reads MATLPRAAAAAAPSPAAALLPLPRAAPLLAGRAAARSAARRLRARGTRAPPL. The active-site Nucleophile is the Cys-97. Positions 97–496 constitute a Glutamine amidotransferase type-2 domain; that stretch reads CGVGFVANLK…PGMMITVDLQ (400 aa). 1175–1232 contributes to the FMN binding site; sequence LSETHQTLIQNGLRERVVLRVDGGFRSGLDVLMAAAMGADEYGFGSVAMIATGCVMAR. Cys-1228, Cys-1234, and Cys-1239 together coordinate [3Fe-4S] cluster.

This sequence belongs to the glutamate synthase family. [3Fe-4S] cluster is required as a cofactor. Requires FAD as cofactor. It depends on FMN as a cofactor. Expressed in leaf blades and at lower levels in roots.

The protein localises to the plastid. Its subcellular location is the chloroplast. It carries out the reaction 2 oxidized [2Fe-2S]-[ferredoxin] + 2 L-glutamate = L-glutamine + 2 reduced [2Fe-2S]-[ferredoxin] + 2-oxoglutarate + 2 H(+). The protein operates within amino-acid biosynthesis; L-glutamate biosynthesis via GLT pathway; L-glutamate from 2-oxoglutarate and L-glutamine (ferredoxin route): step 1/1. It participates in energy metabolism; nitrogen metabolism. Its function is as follows. Involved in glutamate biosynthesis in leaf. Required for the reassimilation of ammonium ions generated during photorespiration. The polypeptide is Ferredoxin-dependent glutamate synthase, chloroplastic (GLU) (Oryza sativa subsp. japonica (Rice)).